The chain runs to 389 residues: Acetate kinase (389 aa).

Asn-9 is a binding site for Mg(2+). Lys-16 provides a ligand contact to ATP. Arg-77 serves as a coordination point for substrate. Catalysis depends on Asp-134, which acts as the Proton donor/acceptor. ATP contacts are provided by residues 194-198 (HLGNG), 268-270 (DFR), and 316-320 (GVGEN). Position 370 (Glu-370) interacts with Mg(2+).

The protein belongs to the acetokinase family. Homodimer. Requires Mg(2+) as cofactor. It depends on Mn(2+) as a cofactor.

Its subcellular location is the cytoplasm. The enzyme catalyses acetate + ATP = acetyl phosphate + ADP. It participates in metabolic intermediate biosynthesis; acetyl-CoA biosynthesis; acetyl-CoA from acetate: step 1/2. Functionally, catalyzes the formation of acetyl phosphate from acetate and ATP. Can also catalyze the reverse reaction. This chain is Acetate kinase, found in Mycolicibacterium vanbaalenii (strain DSM 7251 / JCM 13017 / BCRC 16820 / KCTC 9966 / NRRL B-24157 / PYR-1) (Mycobacterium vanbaalenii).